The chain runs to 101 residues: Small ribosomal subunit protein uS14 (101 aa).

It belongs to the universal ribosomal protein uS14 family. In terms of assembly, part of the 30S ribosomal subunit. Contacts proteins S3 and S10.

In terms of biological role, binds 16S rRNA, required for the assembly of 30S particles and may also be responsible for determining the conformation of the 16S rRNA at the A site. In Aliivibrio fischeri (strain ATCC 700601 / ES114) (Vibrio fischeri), this protein is Small ribosomal subunit protein uS14.